The following is a 155-amino-acid chain: Small ribosomal subunit protein uS7 (155 aa).

Belongs to the universal ribosomal protein uS7 family. As to quaternary structure, part of the 30S ribosomal subunit. Contacts proteins S9 and S11.

One of the primary rRNA binding proteins, it binds directly to 16S rRNA where it nucleates assembly of the head domain of the 30S subunit. Is located at the subunit interface close to the decoding center, probably blocks exit of the E-site tRNA. The polypeptide is Small ribosomal subunit protein uS7 (Mycoplasma mycoides subsp. mycoides SC (strain CCUG 32753 / NCTC 10114 / PG1)).